The sequence spans 665 residues: tRNA 5-methylaminomethyl-2-thiouridine biosynthesis bifunctional protein MnmC (665 aa).

The tract at residues 1 to 243 (MSQTSLHHAR…KWAMLAGERV (243 aa)) is tRNA (mnm(5)s(2)U34)-methyltransferase. The segment at 268–665 (IGGGIASAMT…RKLLKGKPLN (398 aa)) is FAD-dependent cmnm(5)s(2)U34 oxidoreductase.

It in the N-terminal section; belongs to the methyltransferase superfamily. tRNA (mnm(5)s(2)U34)-methyltransferase family. In the C-terminal section; belongs to the DAO family. The cofactor is FAD.

It is found in the cytoplasm. The catalysed reaction is 5-aminomethyl-2-thiouridine(34) in tRNA + S-adenosyl-L-methionine = 5-methylaminomethyl-2-thiouridine(34) in tRNA + S-adenosyl-L-homocysteine + H(+). Its function is as follows. Catalyzes the last two steps in the biosynthesis of 5-methylaminomethyl-2-thiouridine (mnm(5)s(2)U) at the wobble position (U34) in tRNA. Catalyzes the FAD-dependent demodification of cmnm(5)s(2)U34 to nm(5)s(2)U34, followed by the transfer of a methyl group from S-adenosyl-L-methionine to nm(5)s(2)U34, to form mnm(5)s(2)U34. The chain is tRNA 5-methylaminomethyl-2-thiouridine biosynthesis bifunctional protein MnmC from Aeromonas salmonicida (strain A449).